The chain runs to 369 residues: Flagellar P-ring protein (369 aa).

An N-terminal signal peptide occupies residues 1-24 (MKTLHRCIGVALLALGALAGTAHA).

The protein belongs to the FlgI family. In terms of assembly, the basal body constitutes a major portion of the flagellar organelle and consists of four rings (L,P,S, and M) mounted on a central rod.

The protein resides in the periplasm. The protein localises to the bacterial flagellum basal body. Functionally, assembles around the rod to form the L-ring and probably protects the motor/basal body from shearing forces during rotation. The polypeptide is Flagellar P-ring protein (Ralstonia nicotianae (strain ATCC BAA-1114 / GMI1000) (Ralstonia solanacearum)).